The primary structure comprises 63 residues: Conotoxin TeAr193 (63 aa).

Residues 1-22 (MRCLPVFVILLLLIASAPSVDA) form the signal peptide. Residues 23–48 (QPKTKDDIPQASFLDNAKRYLQVLES) constitute a propeptide that is removed on maturation.

This sequence belongs to the conotoxin T superfamily. Post-translationally, contains 2 disulfide bonds that can be either 'C1-C3, C2-C4' or 'C1-C4, C2-C3', since these disulfide connectivities have been observed for conotoxins with cysteine framework V (for examples, see AC P0DQQ7 and AC P81755). Expressed by the venom duct.

It is found in the secreted. The chain is Conotoxin TeAr193 from Conus textile (Cloth-of-gold cone).